A 134-amino-acid polypeptide reads, in one-letter code: ATP synthase epsilon chain, chloroplastic (134 aa).

Belongs to the ATPase epsilon chain family. In terms of assembly, F-type ATPases have 2 components, CF(1) - the catalytic core - and CF(0) - the membrane proton channel. CF(1) has five subunits: alpha(3), beta(3), gamma(1), delta(1), epsilon(1). CF(0) has three main subunits: a, b and c.

It is found in the plastid. The protein resides in the chloroplast thylakoid membrane. Produces ATP from ADP in the presence of a proton gradient across the membrane. The polypeptide is ATP synthase epsilon chain, chloroplastic (Liriodendron tulipifera (Tuliptree)).